A 474-amino-acid chain; its full sequence is PTS system MurNAc-GlcNAc-specific EIIBC component (474 aa).

The 83-residue stretch at 5–87 folds into the PTS EIIB type-1 domain; that stretch reads ERLAKDITHA…ADQSGATLAE (83 aa). The active-site Phosphocysteine intermediate; for EIIB activity is Cys-27. One can recognise a PTS EIIC type-1 domain in the interval 124–474; that stretch reads KSIANIFIPL…GTTKEMRNPE (351 aa). Transmembrane regions (helical) follow at residues 129-149, 167-187, 193-213, 228-248, 268-288, 299-319, 343-363, 378-398, 402-422, and 444-464; these read IFIP…IAAI, IVTV…IFTG, VFGA…LTGI, LAAG…LSMV, ITLL…AGFV, IIGV…LPLV, LLPI…ALWV, ALPV…TLPL, FFTA…IGHI, and LGYI…TYFF.

It is found in the cell membrane. It catalyses the reaction N-acetyl-beta-D-muramate-(1-&gt;4)-N-acetyl-D-glucosamine(out) + N(pros)-phospho-L-histidyl-[protein] = 6-phospho-N-acetyl-beta-D-muramate-(1-&gt;4)-N-acetyl-D-glucosamine(in) + L-histidyl-[protein]. It participates in cell wall biogenesis; peptidoglycan recycling. The phosphoenolpyruvate-dependent sugar phosphotransferase system (sugar PTS), a major carbohydrate active transport system, catalyzes the phosphorylation of incoming sugar substrates concomitantly with their translocation across the cell membrane. This system is involved in the uptake and phosphorylation of MurNAc-GlcNAc, the principle peptidoglycan turnover product of S.aureus, yielding cytoplasmic MurNAc 6P-GlcNAc. In Staphylococcus epidermidis (strain ATCC 35984 / DSM 28319 / BCRC 17069 / CCUG 31568 / BM 3577 / RP62A), this protein is PTS system MurNAc-GlcNAc-specific EIIBC component.